Consider the following 157-residue polypeptide: Ribosomal RNA large subunit methyltransferase H (157 aa).

S-adenosyl-L-methionine-binding positions include leucine 73, glycine 105, and 124–129 (LSRMTF).

The protein belongs to the RNA methyltransferase RlmH family. Homodimer.

It is found in the cytoplasm. It catalyses the reaction pseudouridine(1915) in 23S rRNA + S-adenosyl-L-methionine = N(3)-methylpseudouridine(1915) in 23S rRNA + S-adenosyl-L-homocysteine + H(+). Specifically methylates the pseudouridine at position 1915 (m3Psi1915) in 23S rRNA. This Porphyromonas gingivalis (strain ATCC BAA-308 / W83) protein is Ribosomal RNA large subunit methyltransferase H.